The sequence spans 495 residues: Aspartyl/glutamyl-tRNA(Asn/Gln) amidotransferase subunit B (495 aa).

Belongs to the GatB/GatE family. GatB subfamily. In terms of assembly, heterotrimer of A, B and C subunits.

It catalyses the reaction L-glutamyl-tRNA(Gln) + L-glutamine + ATP + H2O = L-glutaminyl-tRNA(Gln) + L-glutamate + ADP + phosphate + H(+). The catalysed reaction is L-aspartyl-tRNA(Asn) + L-glutamine + ATP + H2O = L-asparaginyl-tRNA(Asn) + L-glutamate + ADP + phosphate + 2 H(+). Functionally, allows the formation of correctly charged Asn-tRNA(Asn) or Gln-tRNA(Gln) through the transamidation of misacylated Asp-tRNA(Asn) or Glu-tRNA(Gln) in organisms which lack either or both of asparaginyl-tRNA or glutaminyl-tRNA synthetases. The reaction takes place in the presence of glutamine and ATP through an activated phospho-Asp-tRNA(Asn) or phospho-Glu-tRNA(Gln). The polypeptide is Aspartyl/glutamyl-tRNA(Asn/Gln) amidotransferase subunit B (Crocosphaera subtropica (strain ATCC 51142 / BH68) (Cyanothece sp. (strain ATCC 51142))).